The following is a 213-amino-acid chain: 2-C-methyl-D-erythritol 4-phosphate cytidylyltransferase (213 aa).

Belongs to the IspD/TarI cytidylyltransferase family. IspD subfamily.

It carries out the reaction 2-C-methyl-D-erythritol 4-phosphate + CTP + H(+) = 4-CDP-2-C-methyl-D-erythritol + diphosphate. It functions in the pathway isoprenoid biosynthesis; isopentenyl diphosphate biosynthesis via DXP pathway; isopentenyl diphosphate from 1-deoxy-D-xylulose 5-phosphate: step 2/6. Its function is as follows. Catalyzes the formation of 4-diphosphocytidyl-2-C-methyl-D-erythritol from CTP and 2-C-methyl-D-erythritol 4-phosphate (MEP). This chain is 2-C-methyl-D-erythritol 4-phosphate cytidylyltransferase, found in Thermus thermophilus (strain ATCC BAA-163 / DSM 7039 / HB27).